Consider the following 137-residue polypeptide: Golgin subfamily A member 7 (137 aa).

2 S-palmitoyl cysteine lipidation sites follow: Cys69 and Cys72.

Belongs to the ERF4 family. In terms of assembly, interacts with GOLGA3. Interacts with ZDHHC9. Palmitoylated on Cys-69 and Cys-72; which is required for Golgi localization and interaction with GOLGA3.

The protein localises to the golgi apparatus membrane. Its function is as follows. May be involved in protein transport from Golgi to cell surface. The ZDHHC9-GOLGA7 complex is a palmitoyltransferase specific for HRAS and NRAS. This Rattus norvegicus (Rat) protein is Golgin subfamily A member 7 (Golga7).